Reading from the N-terminus, the 215-residue chain is MSACLGFRELGLQPYEPVLEAMRRFTEQRSPDSQDEIWLVEHPAVFTQGQAGKAEHLLVPGDIPVVQTDRGGQVTYHGPGQQVAYLLLDVRRLGFGVRELVSRIEQALIGLLASYDVQASAKPDAPGVYVDGAKIASLGLRIRNGRSFHGLALNVDMDLAPFRRINPCGYAGLAMTQLRDLAGPIELDEVRTRLRGQLVKHLDYAEQTTLTGGID.

The BPL/LPL catalytic domain occupies 31-206 (PDSQDEIWLV…QLVKHLDYAE (176 aa)). Residues 70-77 (RGGQVTYH), 137-139 (SLG), and 150-152 (GLA) each bind substrate. The active-site Acyl-thioester intermediate is Cys-168.

Belongs to the LipB family.

It localises to the cytoplasm. It carries out the reaction octanoyl-[ACP] + L-lysyl-[protein] = N(6)-octanoyl-L-lysyl-[protein] + holo-[ACP] + H(+). It participates in protein modification; protein lipoylation via endogenous pathway; protein N(6)-(lipoyl)lysine from octanoyl-[acyl-carrier-protein]: step 1/2. In terms of biological role, catalyzes the transfer of endogenously produced octanoic acid from octanoyl-acyl-carrier-protein onto the lipoyl domains of lipoate-dependent enzymes. Lipoyl-ACP can also act as a substrate although octanoyl-ACP is likely to be the physiological substrate. This Pseudomonas putida (strain GB-1) protein is Octanoyltransferase.